A 227-amino-acid chain; its full sequence is 2,3-bisphosphoglycerate-dependent phosphoglycerate mutase (227 aa).

Residues Arg-7 to Asn-14, Thr-20 to Gly-21, Arg-59, Glu-86 to Tyr-89, Lys-97, Arg-113 to Arg-114, and Gly-182 to Asn-183 contribute to the substrate site. The Tele-phosphohistidine intermediate role is filled by His-8. The active-site Proton donor/acceptor is Glu-86.

The protein belongs to the phosphoglycerate mutase family. BPG-dependent PGAM subfamily. In terms of assembly, homodimer.

It carries out the reaction (2R)-2-phosphoglycerate = (2R)-3-phosphoglycerate. It participates in carbohydrate degradation; glycolysis; pyruvate from D-glyceraldehyde 3-phosphate: step 3/5. Its function is as follows. Catalyzes the interconversion of 2-phosphoglycerate and 3-phosphoglycerate. The protein is 2,3-bisphosphoglycerate-dependent phosphoglycerate mutase of Neisseria gonorrhoeae (strain ATCC 700825 / FA 1090).